The following is a 90-amino-acid chain: Large ribosomal subunit protein bL27 (90 aa).

Residues methionine 1 to leucine 21 form a disordered region.

The protein belongs to the bacterial ribosomal protein bL27 family.

The chain is Large ribosomal subunit protein bL27 from Laribacter hongkongensis (strain HLHK9).